The primary structure comprises 340 residues: Phosphate acyltransferase (340 aa).

The protein belongs to the PlsX family. In terms of assembly, homodimer. Probably interacts with PlsY.

Its subcellular location is the cytoplasm. It catalyses the reaction a fatty acyl-[ACP] + phosphate = an acyl phosphate + holo-[ACP]. It functions in the pathway lipid metabolism; phospholipid metabolism. Its function is as follows. Catalyzes the reversible formation of acyl-phosphate (acyl-PO(4)) from acyl-[acyl-carrier-protein] (acyl-ACP). This enzyme utilizes acyl-ACP as fatty acyl donor, but not acyl-CoA. This Trichodesmium erythraeum (strain IMS101) protein is Phosphate acyltransferase.